The chain runs to 651 residues: Zinc metalloproteinase nas-32 (651 aa).

Positions 1 to 21 are cleaved as a signal peptide; that stretch reads MRRFFICYIGFLSIFLDFILA. Residues 22–202 constitute a propeptide that is removed on maturation; the sequence is DKDNNSEEER…EQSSKSRRKK (181 aa). 3 N-linked (GlcNAc...) asparagine glycosylation sites follow: Asn-25, Asn-72, and Asn-251. A Peptidase M12A domain is found at 203-394; that stretch reads RQIDNLAQFW…KMLNTHYSCS (192 aa). 6 disulfides stabilise this stretch: Cys-245-Cys-393, Cys-264-Cys-283, Cys-395-Cys-412, Cys-415-Cys-426, Cys-434-Cys-467, and Cys-495-Cys-516. His-291 provides a ligand contact to Zn(2+). The active site involves Glu-292. The Zn(2+) site is built by His-295 and His-301. In terms of domain architecture, EGF-like spans 380-433; that stretch reads TFLDLKMLNTHYSCSCPTILSCGNGGFTNPANCSVCICPYGFGGALCTERTDYG. Asn-411 is a glycosylation site (N-linked (GlcNAc...) asparagine). The region spanning 434–554 is the CUB domain; sequence CGSTLTATDT…TTYTWSYRYV (121 aa). Residue Asn-453 is glycosylated (N-linked (GlcNAc...) asparagine). N-linked (GlcNAc...) asparagine glycosylation occurs at Asn-557. 3 disulfide bridges follow: Cys-610–Cys-647, Cys-619–Cys-640, and Cys-628–Cys-644. Residues 610 to 647 enclose the ShKT domain; that stretch reads CKDRFPKSQCSTYSTNGMCTQQPPLAAEFSCAETCGFC.

The cofactor is Zn(2+). As to expression, expressed in pharyngeal, anal depressor, intestinal and vulva muscles, head neurons and head mesodermal cell.

It localises to the secreted. Its function is as follows. Metalloprotease. This is Zinc metalloproteinase nas-32 (nas-32) from Caenorhabditis elegans.